Consider the following 156-residue polypeptide: Gamma-L-glutamyl-butirosin B gamma-glutamyl cyclotransferase (156 aa).

24–27 (YGTL) lines the substrate pocket. E89 (proton acceptor) is an active-site residue.

This sequence belongs to the gamma-glutamylcyclotransferase family.

It catalyses the reaction gamma-L-glutamyl-butirosin B = butirosin B + 5-oxo-L-proline. It functions in the pathway antibiotic biosynthesis; butirosin biosynthesis. Functionally, cyclotransferase that catalyzes the last step in the biosynthesis of the aminoglycoside antibiotic butirosin B. Cleaves the amide bond via transamidation using the alpha-amine of the terminal gamma-L-glutamate of the side chain, releasing it as the cyclic 5-oxoproline. In Niallia circulans (Bacillus circulans), this protein is Gamma-L-glutamyl-butirosin B gamma-glutamyl cyclotransferase (btrG).